The sequence spans 76 residues: uncharacterized protein (76 aa).

This sequence belongs to the IIV-6 342R family.

This is an uncharacterized protein from Invertebrate iridescent virus 3 (IIV-3).